A 283-amino-acid polypeptide reads, in one-letter code: tRNA-cytidine(32) 2-sulfurtransferase (283 aa).

The PP-loop motif signature appears at 37 to 42 (SGGKDS). [4Fe-4S] cluster-binding residues include C112, C115, and C203.

Belongs to the TtcA family. As to quaternary structure, homodimer. The cofactor is Mg(2+). [4Fe-4S] cluster is required as a cofactor.

It localises to the cytoplasm. It catalyses the reaction cytidine(32) in tRNA + S-sulfanyl-L-cysteinyl-[cysteine desulfurase] + AH2 + ATP = 2-thiocytidine(32) in tRNA + L-cysteinyl-[cysteine desulfurase] + A + AMP + diphosphate + H(+). It functions in the pathway tRNA modification. Its function is as follows. Catalyzes the ATP-dependent 2-thiolation of cytidine in position 32 of tRNA, to form 2-thiocytidine (s(2)C32). The sulfur atoms are provided by the cysteine/cysteine desulfurase (IscS) system. This Legionella pneumophila subsp. pneumophila (strain Philadelphia 1 / ATCC 33152 / DSM 7513) protein is tRNA-cytidine(32) 2-sulfurtransferase.